Here is an 897-residue protein sequence, read N- to C-terminus: Leucine--tRNA ligase (897 aa).

The 'HIGH' region motif lies at 49-59 (PYPSGKLHMGH). A 'KMSKS' region motif is present at residues 654–658 (KMSKS). Lysine 657 is a binding site for ATP.

Belongs to the class-I aminoacyl-tRNA synthetase family.

It localises to the cytoplasm. It catalyses the reaction tRNA(Leu) + L-leucine + ATP = L-leucyl-tRNA(Leu) + AMP + diphosphate. The sequence is that of Leucine--tRNA ligase from Methylibium petroleiphilum (strain ATCC BAA-1232 / LMG 22953 / PM1).